A 158-amino-acid polypeptide reads, in one-letter code: Complexin-3 (158 aa).

The disordered stretch occupies residues 14–47 (KNLTGSLGGGEDKGDGDKSAAEAQGMSREEYEEY). A compositionally biased stretch (basic and acidic residues) spans 23–33 (GEDKGDGDKSA). A coiled-coil region spans residues 39–74 (MSREEYEEYQKQLVEEKMERDAQFTQRKAERATLRS). Cys155 carries the post-translational modification Cysteine methyl ester. Cys155 carries the S-farnesyl cysteine lipid modification. A propeptide spans 156 to 158 (HIM) (removed in mature form).

It belongs to the complexin/synaphin family. Binds to the SNARE core complex containing SNAP25, VAMP2 and STX1A. Farnesylation mediates presynaptic targeting. Present in many brain regions, including hippocampus and cerebellum (at protein level). Expressed in the retina (at protein level). Expressed in retinal amacrine cells (at protein level). Expressed in retinal photoreceptor ribbon synapses. Expressed in the retinal inner nuclear layer, at bipolar cells (at protein level). Expressed in cone photoreceptor synaptic terminals (at protein level).

The protein localises to the synapse. It is found in the cell membrane. Functionally, complexin that regulates SNARE protein complex-mediated synaptic vesicle fusion. Required for the maintenance of synaptic ultrastructure in the adult retina. Positively regulates synaptic transmission through synaptic vesicle availability and exocytosis of neurotransmitters at photoreceptor ribbon synapses in the retina. Suppresses tonic photoreceptor activity and baseline 'noise' by suppression of Ca(2+) vesicle tonic release and the facilitation of evoked synchronous and asynchronous Ca(2+) vesicle release. The sequence is that of Complexin-3 (Cplx3) from Mus musculus (Mouse).